The chain runs to 426 residues: Histidine--tRNA ligase (426 aa).

It belongs to the class-II aminoacyl-tRNA synthetase family. In terms of assembly, homodimer.

It is found in the cytoplasm. The enzyme catalyses tRNA(His) + L-histidine + ATP = L-histidyl-tRNA(His) + AMP + diphosphate + H(+). The sequence is that of Histidine--tRNA ligase from Streptococcus pyogenes serotype M1.